A 729-amino-acid polypeptide reads, in one-letter code: Serine/threonine-protein kinase TBK1 (729 aa).

The 302-residue stretch at Trp9–Val310 folds into the Protein kinase domain. ATP is bound at residue Leu15–Val23. Lys30 participates in a covalent cross-link: Glycyl lysine isopeptide (Lys-Gly) (interchain with G-Cter in ubiquitin). Lys38 is an ATP binding site. The active-site Proton acceptor is the Asp135. A Phosphoserine; by autocatalysis and IKKB modification is found at Ser172. A Ubiquitin-like domain is found at Met309–Glu385. Lys401 participates in a covalent cross-link: Glycyl lysine isopeptide (Lys-Gly) (interchain with G-Cter in ubiquitin). 2 coiled-coil regions span residues Asp407–Thr657 and Leu658–Arg713. An interaction with AZI2, TANK and TBKBP1 region spans residues Arg621–Leu729. Lys670 participates in a covalent cross-link: Glycyl lysine isopeptide (Lys-Gly) (interchain with G-Cter in ubiquitin). Ser716 carries the phosphoserine modification.

Belongs to the protein kinase superfamily. Ser/Thr protein kinase family. I-kappa-B kinase subfamily. As to quaternary structure, homodimer. Interacts with DDX3X, TIRAP and TRAF2. Part of a ternary complex consisting of TANK, TRAF2 and TBK1. Interacts with AZI2, TANK and TBKBP1; these interactions are mutually exclusive and mediate TBK1 activation. Interacts with GSK3B; this interaction promotes TBK1 self-association and autophosphorylation. Interacts with SIKE1; SIKE1 is associated with TBK1 under physiological condition and dissociated from TBK1 upon viral infection or TLR3 stimulation. Interacts with IRF3, leading to IRF3 phosphorylation. Interacts with RIGI. Interacts with CYLD. Interacts with OPTN and TRAF3. Interacts with SRC. Interacts with the exocyst complex subunit SEC5/EXOC2; this interaction is sufficient to trigger TBK1 activity. Interacts with STING1, leading to STING1 phosphorylation. Interacts with IFIT3 (via N-terminus). Interacts with MAVS; interaction only takes place in the presence of IFIT3 and leads to MAVS phosphorylation. Interacts (via protein kinase domain) with TTLL12 (via TTL domain); the interaction prevents MAVS binding to TBK1. Interacts with TICAM1; this interaction is enhanced in the presence of WDFY1 and leads to TICAM1 phosphorylation. Interacts with TRIM26. Interacts with TRIM23. Interacts with TTC4 and IKBKE. Interacts with HNRNPA2B1. Interacts with DDX3X. Interacts with TRIM14. Interacts with CEP170; efficient complex formation may be dependent on the presence of CCDC61. Interacts with TRAF3IP3. Interacts with HSP90AA1; the interaction mediates TBK1 association with TOMM70. Interacts with TAX1BP1. Interacts with kinase IKBKB; the complex interacts with STAT1, leading to phosphorylation of STAT1 on 'Thr-748' by IKBKB. Interacts with ICOS; this interaction is critical for the maturation of T follicular regulatory cells. Interacts with RNF144B; this interaction prevents TBK1 phosphorylation and subsequent activation. Interacts with ASB8; this interaction promotes TBK1 proteasomal degradation. Post-translationally, autophosphorylation at Ser-172 activates the kinase, and is an essential step for virus-triggered signaling. Phosphorylated by IKBKB/IKKB at Ser-172. Phosphorylation requires homodimerization and ubiquitination at Lys-30 and Lys-401. Dephosphorylated at Ser-172 by PPM1B and this negatively regulates its role in mediating antiviral response. In terms of processing, 'Lys-63'-linked polyubiquitination by MIB1 after RNA virus infection, or by NRDP1 after LPS stimulation at Lys-30 and Lys-401, participates in kinase activation. 'Lys-48'-linked polyubiquitination at Lys-670 by DTX4 leads to proteasomal degradation. 'Lys-48'-linked polyubiquitination by TRAIP also leads to proteasomal degradation. 'Lys-48'-linked polyubiquitination by TRAF7; leading to proteasomal degradation. 'Lys-63'-linked polyubiquitination by RNF128 at Lys-30 and Lys-401 leads to the activation of antiviral responses. 'Lys-48'-linked polyubiquitination after 'lys-33'-linked deubiquitination by USP38 promotes TBK1 degradation.

It is found in the cytoplasm. It carries out the reaction L-seryl-[protein] + ATP = O-phospho-L-seryl-[protein] + ADP + H(+). The enzyme catalyses L-threonyl-[protein] + ATP = O-phospho-L-threonyl-[protein] + ADP + H(+). Its activity is regulated as follows. Kinase activity is inhibited competitively by amlexanox. Functionally, serine/threonine kinase that plays an essential role in regulating inflammatory responses to foreign agents. Following activation of toll-like receptors by viral or bacterial components, associates with TRAF3 and TANK and phosphorylates interferon regulatory factors (IRFs) IRF3 and IRF7 as well as DDX3X. This activity allows subsequent homodimerization and nuclear translocation of the IRFs leading to transcriptional activation of pro-inflammatory and antiviral genes including IFNA and IFNB. In order to establish such an antiviral state, TBK1 form several different complexes whose composition depends on the type of cell and cellular stimuli. Thus, several scaffolding molecules including FADD, TRADD, MAVS, AZI2, TANK or TBKBP1/SINTBAD can be recruited to the TBK1-containing-complexes. Plays a key role in IRF3 activation: acts by first phosphorylating innate adapter proteins MAVS, STING1 and TICAM1 on their pLxIS motif, leading to recruitment of IRF3, thereby licensing IRF3 for phosphorylation by TBK1. Under particular conditions, functions as a NF-kappa-B effector by phosphorylating NF-kappa-B inhibitor alpha/NFKBIA, IKBKB or RELA to translocate NF-Kappa-B to the nucleus. Restricts bacterial proliferation by phosphorylating the autophagy receptor OPTN/Optineurin on 'Ser-177', thus enhancing LC3 binding affinity and antibacterial autophagy. Phosphorylates SMCR8 component of the C9orf72-SMCR8 complex, promoting autophagosome maturation. Phosphorylates ATG8 proteins MAP1LC3C and GABARAPL2, thereby preventing their delipidation and premature removal from nascent autophagosomes. Seems to play a role in energy balance regulation by sustaining a state of chronic, low-grade inflammation in obesity, which leads to a negative impact on insulin sensitivity. Acts both as a positive and negative regulator of the mTORC1 complex, depending on the context: activates mTORC1 in response to growth factors by catalyzing phosphorylation of MTOR, while it limits the mTORC1 complex by promoting phosphorylation of RPTOR. Acts as a positive regulator of the mTORC2 complex by mediating phosphorylation of MTOR, leading to increased phosphorylation and activation of AKT1. Phosphorylates and activates AKT1. Involved in the regulation of TNF-induced RIPK1-mediated cell death, probably acting via CYLD phosphorylation that in turn controls RIPK1 ubiquitination status. Also participates in the differentiation of T follicular regulatory cells together with the receptor ICOS. In Mus musculus (Mouse), this protein is Serine/threonine-protein kinase TBK1.